Consider the following 172-residue polypeptide: Lipoprotein signal peptidase (172 aa).

3 consecutive transmembrane segments (helical) span residues 10–30 (LIWLLLSVLVVGLDQWSKAWV), 68–88 (WQLWFFTALAVGISGLLAFWL), and 98–118 (SALPYALVIGGAIGNVIDRLM). Active-site residues include Asp124 and Asp142. The chain crosses the membrane as a helical span at residues 138 to 158 (FNIADSAIVGGAIGIAVFGLF).

It belongs to the peptidase A8 family.

It is found in the cell inner membrane. The catalysed reaction is Release of signal peptides from bacterial membrane prolipoproteins. Hydrolyzes -Xaa-Yaa-Zaa-|-(S,diacylglyceryl)Cys-, in which Xaa is hydrophobic (preferably Leu), and Yaa (Ala or Ser) and Zaa (Gly or Ala) have small, neutral side chains.. It participates in protein modification; lipoprotein biosynthesis (signal peptide cleavage). In terms of biological role, this protein specifically catalyzes the removal of signal peptides from prolipoproteins. This Xanthomonas euvesicatoria pv. vesicatoria (strain 85-10) (Xanthomonas campestris pv. vesicatoria) protein is Lipoprotein signal peptidase.